Reading from the N-terminus, the 150-residue chain is UPF0208 membrane protein VC_1099 (150 aa).

A run of 2 helical transmembrane segments spans residues 42–62 (FAIK…MVFA) and 70–90 (AIVV…WLGH).

Belongs to the UPF0208 family.

It localises to the cell inner membrane. The sequence is that of UPF0208 membrane protein VC_1099 from Vibrio cholerae serotype O1 (strain ATCC 39315 / El Tor Inaba N16961).